Reading from the N-terminus, the 415-residue chain is Transcriptional regulator fogI (415 aa).

Positions 12–39 (CNACNESKVRCSQTKPTCARCERNKTTC) form a DNA-binding region, zn(2)-C6 fungal-type. Positions 50 to 153 (DAPPISLSHS…ILSPANLDLP (104 aa)) are disordered. 2 stretches are compositionally biased toward low complexity: residues 80–102 (VHIPNATATANATTTANYTSTTT) and 123–135 (QFFAQQQPHHQQP).

Its subcellular location is the nucleus. Functionally, transcriptional regulator that postively regulates the expression of the gene cluster that mediates the biosynthesis of flavoglaucin and congeners (including aspergin, dihydroauroglaucin and auroglaucin), prenylated salicylaldehyde derivatives carrying a saturated or an unsaturated C-7 side chain. The chain is Transcriptional regulator fogI from Aspergillus ruber (strain CBS 135680).